A 143-amino-acid chain; its full sequence is Large ribosomal subunit protein uL16 (143 aa).

The protein belongs to the universal ribosomal protein uL16 family. As to quaternary structure, part of the 50S ribosomal subunit.

Its function is as follows. Binds 23S rRNA and is also seen to make contacts with the A and possibly P site tRNAs. This Fusobacterium nucleatum subsp. nucleatum (strain ATCC 25586 / DSM 15643 / BCRC 10681 / CIP 101130 / JCM 8532 / KCTC 2640 / LMG 13131 / VPI 4355) protein is Large ribosomal subunit protein uL16.